Consider the following 504-residue polypeptide: Probable cytosol aminopeptidase (504 aa).

Residues Lys274 and Asp279 each coordinate Mn(2+). Lys286 is an active-site residue. Mn(2+)-binding residues include Asp297, Asp356, and Glu358. Residue Arg360 is part of the active site.

This sequence belongs to the peptidase M17 family. It depends on Mn(2+) as a cofactor.

The protein localises to the cytoplasm. The catalysed reaction is Release of an N-terminal amino acid, Xaa-|-Yaa-, in which Xaa is preferably Leu, but may be other amino acids including Pro although not Arg or Lys, and Yaa may be Pro. Amino acid amides and methyl esters are also readily hydrolyzed, but rates on arylamides are exceedingly low.. It catalyses the reaction Release of an N-terminal amino acid, preferentially leucine, but not glutamic or aspartic acids.. Presumably involved in the processing and regular turnover of intracellular proteins. Catalyzes the removal of unsubstituted N-terminal amino acids from various peptides. This Gloeobacter violaceus (strain ATCC 29082 / PCC 7421) protein is Probable cytosol aminopeptidase.